We begin with the raw amino-acid sequence, 168 residues long: Ribosome maturation factor RimM (168 aa).

The PRC barrel domain maps to 95-166; that stretch reads EHEFYYSDII…RIQITPMEGL (72 aa).

The protein belongs to the RimM family. As to quaternary structure, binds ribosomal protein uS19.

Its subcellular location is the cytoplasm. Functionally, an accessory protein needed during the final step in the assembly of 30S ribosomal subunit, possibly for assembly of the head region. Essential for efficient processing of 16S rRNA. May be needed both before and after RbfA during the maturation of 16S rRNA. It has affinity for free ribosomal 30S subunits but not for 70S ribosomes. This is Ribosome maturation factor RimM from Staphylococcus saprophyticus subsp. saprophyticus (strain ATCC 15305 / DSM 20229 / NCIMB 8711 / NCTC 7292 / S-41).